The primary structure comprises 320 residues: Ferrochelatase (320 aa).

2 residues coordinate Fe cation: His-194 and Glu-275.

This sequence belongs to the ferrochelatase family. In terms of assembly, monomer.

The protein localises to the cytoplasm. It catalyses the reaction heme b + 2 H(+) = protoporphyrin IX + Fe(2+). It functions in the pathway porphyrin-containing compound metabolism; protoheme biosynthesis; protoheme from protoporphyrin-IX: step 1/1. Catalyzes the ferrous insertion into protoporphyrin IX. This chain is Ferrochelatase, found in Shigella dysenteriae serotype 1 (strain Sd197).